The chain runs to 381 residues: Sterol 24-C-methyltransferase ERG6A (381 aa).

This sequence belongs to the class I-like SAM-binding methyltransferase superfamily. Erg6/SMT family.

The catalysed reaction is lanosterol + S-adenosyl-L-methionine = eburicol + S-adenosyl-L-homocysteine + H(+). The protein operates within steroid metabolism; ergosterol biosynthesis. In terms of biological role, sterol 24-C-methyltransferase; part of the third module of ergosterol biosynthesis pathway that includes the late steps of the pathway. ERG6A and ERG6B methylate lanosterol at C-24 to produce eburicol. The third module or late pathway involves the ergosterol synthesis itself through consecutive reactions that mainly occur in the endoplasmic reticulum (ER) membrane. Firstly, the squalene synthase ERG9 catalyzes the condensation of 2 farnesyl pyrophosphate moieties to form squalene, which is the precursor of all steroids. Squalene synthase is crucial for balancing the incorporation of farnesyl diphosphate (FPP) into sterol and nonsterol isoprene synthesis. Secondly, squalene is converted into lanosterol by the consecutive action of the squalene epoxidase ERG1 and the lanosterol synthase ERG7. Then, the delta(24)-sterol C-methyltransferase ERG6 methylates lanosterol at C-24 to produce eburicol. Eburicol is the substrate of the sterol 14-alpha demethylase encoded by CYP51A, CYP51B and CYP51C, to yield 4,4,24-trimethyl ergosta-8,14,24(28)-trienol. CYP51B encodes the enzyme primarily responsible for sterol 14-alpha-demethylation, and plays an essential role in ascospore formation. CYP51A encodes an additional sterol 14-alpha-demethylase, induced on ergosterol depletion and responsible for the intrinsic variation in azole sensitivity. The third CYP51 isoform, CYP51C, does not encode a sterol 14-alpha-demethylase, but is required for full virulence on host wheat ears. The C-14 reductase ERG24 then reduces the C14=C15 double bond which leads to 4,4-dimethylfecosterol. A sequence of further demethylations at C-4, involving the C-4 demethylation complex containing the C-4 methylsterol oxidases ERG25, the sterol-4-alpha-carboxylate 3-dehydrogenase ERG26 and the 3-keto-steroid reductase ERG27, leads to the production of fecosterol via 4-methylfecosterol. ERG28 has a role as a scaffold to help anchor ERG25, ERG26 and ERG27 to the endoplasmic reticulum. The C-8 sterol isomerase ERG2 then catalyzes the reaction which results in unsaturation at C-7 in the B ring of sterols and thus converts fecosterol to episterol. The sterol-C5-desaturases ERG3A and ERG3BB then catalyze the introduction of a C-5 double bond in the B ring to produce 5-dehydroepisterol. The C-22 sterol desaturases ERG5A and ERG5B further convert 5-dehydroepisterol into ergosta-5,7,22,24(28)-tetraen-3beta-ol by forming the C-22(23) double bond in the sterol side chain. Finally, ergosta-5,7,22,24(28)-tetraen-3beta-ol is substrate of the C-24(28) sterol reductase ERG4 to produce ergosterol. The sequence is that of Sterol 24-C-methyltransferase ERG6A (FG02783.1) from Gibberella zeae (strain ATCC MYA-4620 / CBS 123657 / FGSC 9075 / NRRL 31084 / PH-1) (Wheat head blight fungus).